The sequence spans 534 residues: Zinc finger protein 671 (534 aa).

The region spanning 49–120 (VVFEDVFVYF…DQVDMTSATE (72 aa)) is the KRAB domain. Residues 192–214 (YLCGACGKQFWFSTDFDQHQNQP) form a C2H2-type 1; degenerate zinc finger. 9 consecutive C2H2-type zinc fingers follow at residues 285-307 (HRCG…QRIH), 313-335 (YECN…QTVH), 341-363 (YECS…RRVH), 369-391 (YQCG…QEVH), 397-419 (YVCS…QRTH), 425-447 (YECS…WRIH), 451-473 (YECS…QKVH), 479-501 (YECS…WKVH), and 507-529 (YVCS…QRVH).

The protein belongs to the krueppel C2H2-type zinc-finger protein family.

The protein resides in the nucleus. Its function is as follows. May be involved in transcriptional regulation. The polypeptide is Zinc finger protein 671 (ZNF671) (Homo sapiens (Human)).